The primary structure comprises 618 residues: Delta-like protein 3 (618 aa).

The signal sequence occupies residues 1–26 (MVSPRMSGLLSQTVILALIFLPQTRP). Residues 27-492 (AGVFELQIHS…LRPGDPQRYL (466 aa)) lie on the Extracellular side of the membrane. The DSL domain occupies 176–215 (ARCEPPAVGTACTRLCRPRSAPSRCGPGLRPCAPLEDECE). EGF-like domains follow at residues 216–249 (APLVCRAGCSPEHGFCEQPGECRCLEGWTGPLCT), 274–310 (GPGPCDGNPCANGGSCSETPRSFECTCPRGFYGLRCE), 312–351 (SGVTCADGPCFNGGLCVGGADPDSAYICHCPPGFQGSNCE), 353–389 (RVDRCSLQPCRNGGLCLDLGHALRCRCRAGFAGPRCE), 391–427 (DLDDCAGRACANGGTCVEGGGAHRCSCALGFGGRDCR), and 429–465 (RADPCAARPCAHGGRCYAHFSGLVCACAPGYMGARCE). Disulfide bonds link cysteine 220–cysteine 231, cysteine 224–cysteine 237, cysteine 239–cysteine 248, cysteine 278–cysteine 289, cysteine 283–cysteine 298, cysteine 300–cysteine 309, cysteine 316–cysteine 327, cysteine 321–cysteine 339, cysteine 341–cysteine 350, cysteine 357–cysteine 368, cysteine 362–cysteine 377, cysteine 379–cysteine 388, cysteine 395–cysteine 406, cysteine 400–cysteine 415, cysteine 417–cysteine 426, cysteine 433–cysteine 444, cysteine 438–cysteine 453, and cysteine 455–cysteine 464. A helical membrane pass occupies residues 493 to 513 (LPPALGLLVAAGVAGAALLLV). Over 514-618 (HVRRRGHSQD…PYPSSILSVK (105 aa)) the chain is Cytoplasmic. Polar residues predominate over residues 546-562 (NLRTQEGSGDGPSSSVD). Residues 546–566 (NLRTQEGSGDGPSSSVDWNRP) are disordered.

In terms of assembly, can bind and activate Notch-1 or another Notch receptor. Ubiquitinated by MIB (MIB1 or MIB2), leading to its endocytosis and subsequent degradation.

The protein resides in the membrane. Functionally, inhibits primary neurogenesis. May be required to divert neurons along a specific differentiation pathway. Plays a role in the formation of somite boundaries during segmentation of the paraxial mesoderm. In Homo sapiens (Human), this protein is Delta-like protein 3 (DLL3).